Consider the following 572-residue polypeptide: Squalene monooxygenase (572 aa).

The Cytoplasmic segment spans residues 1–19 (MWTFLGIATFTYFYKKCGD). An interaction with MARCHF6 region spans residues 1–98 (MWTFLGIATF…EQLESKKCRK (98 aa)). An intramembrane segment occupies 20–40 (VTLANKELLLCVLVFLSLGLV). The Cytoplasmic segment spans residues 41–572 (LSYRCRHRHG…IYSEMKYLVH (532 aa)). Residues 61–72 (QFAAFSDILSAL) form a required for degradation in response to high membrane cholesterol levels region. A sufficient for enzyme activity region spans residues 116–572 (TSFVTDPEVI…IYSEMKYLVH (457 aa)). FAD is bound by residues 131 to 132 (VL), 151 to 152 (ER), arginine 159, arginine 232, valine 248, aspartate 406, and methionine 419. The hydrophobic; mediates interaction with membranes stretch occupies residues 514 to 572 (PLVLIRHFFSVAIYATYFCFKSEPWATKPRALFSSGAVLYKACSILFPLIYSEMKYLVH).

It belongs to the squalene monooxygenase family. As to quaternary structure, interacts (via N-terminal domain) with MARCHF6. Interacts with SMIM22; this interaction modulates lipid droplet formation. It depends on FAD as a cofactor. In terms of processing, ubiquitinated by MARCHF6 in response to high cholesterol levels in intracellular membranes, leading to proteasomal degradation. As to expression, detected in liver.

The protein localises to the microsome membrane. The protein resides in the endoplasmic reticulum membrane. The catalysed reaction is squalene + reduced [NADPH--hemoprotein reductase] + O2 = (S)-2,3-epoxysqualene + oxidized [NADPH--hemoprotein reductase] + H2O + H(+). It participates in terpene metabolism; lanosterol biosynthesis; lanosterol from farnesyl diphosphate: step 2/3. Its function is as follows. Catalyzes the stereospecific oxidation of squalene to (S)-2,3-epoxysqualene, and is considered to be a rate-limiting enzyme in steroid biosynthesis. The polypeptide is Squalene monooxygenase (Sqle) (Mus musculus (Mouse)).